We begin with the raw amino-acid sequence, 267 residues long: Glutamate racemase (267 aa).

Substrate contacts are provided by residues 9–10 (DS) and 41–42 (YS). The active-site Proton donor/acceptor is cysteine 73. 74–75 (NT) is a substrate binding site. Residue cysteine 184 is the Proton donor/acceptor of the active site. Position 185-186 (185-186 (TH)) interacts with substrate.

It belongs to the aspartate/glutamate racemases family.

The catalysed reaction is L-glutamate = D-glutamate. It participates in cell wall biogenesis; peptidoglycan biosynthesis. Its function is as follows. Provides the (R)-glutamate required for cell wall biosynthesis. The protein is Glutamate racemase of Glaesserella parasuis serovar 5 (strain SH0165) (Haemophilus parasuis).